We begin with the raw amino-acid sequence, 97 residues long: RNA-binding protein Hfq (97 aa).

The Sm domain occupies D10–V70.

This sequence belongs to the Hfq family. In terms of assembly, homohexamer.

In terms of biological role, RNA chaperone that binds small regulatory RNA (sRNAs) and mRNAs to facilitate mRNA translational regulation in response to envelope stress, environmental stress and changes in metabolite concentrations. Also binds with high specificity to tRNAs. In Neisseria gonorrhoeae (strain ATCC 700825 / FA 1090), this protein is RNA-binding protein Hfq.